The sequence spans 94 residues: MPSVVPQERQQVTRKHYPNYKVIVLNDDFNTFQHVAACLMKYIPNMTSDRAWELTNQVHYEGQAIVWVGPQEQAELYHEQLLRAGLTMAPLEPE.

Belongs to the ClpS family. In terms of assembly, binds to the N-terminal domain of the chaperone ClpA.

Its function is as follows. Involved in the modulation of the specificity of the ClpAP-mediated ATP-dependent protein degradation. The polypeptide is ATP-dependent Clp protease adapter protein ClpS (Thermosynechococcus vestitus (strain NIES-2133 / IAM M-273 / BP-1)).